Consider the following 149-residue polypeptide: uncharacterized protein (149 aa).

A coiled-coil region spans residues 111–140; the sequence is HKALEKATELIENEEELLKREGIKRENLKF.

This is an uncharacterized protein from Aquifex aeolicus (strain VF5).